Here is a 274-residue protein sequence, read N- to C-terminus: 2,3,4,5-tetrahydropyridine-2,6-dicarboxylate N-succinyltransferase (274 aa).

2 residues coordinate substrate: arginine 106 and aspartate 143.

This sequence belongs to the transferase hexapeptide repeat family. As to quaternary structure, homotrimer.

The protein resides in the cytoplasm. The enzyme catalyses (S)-2,3,4,5-tetrahydrodipicolinate + succinyl-CoA + H2O = (S)-2-succinylamino-6-oxoheptanedioate + CoA. Its pathway is amino-acid biosynthesis; L-lysine biosynthesis via DAP pathway; LL-2,6-diaminopimelate from (S)-tetrahydrodipicolinate (succinylase route): step 1/3. This chain is 2,3,4,5-tetrahydropyridine-2,6-dicarboxylate N-succinyltransferase, found in Cupriavidus metallidurans (strain ATCC 43123 / DSM 2839 / NBRC 102507 / CH34) (Ralstonia metallidurans).